Here is a 185-residue protein sequence, read N- to C-terminus: Elongation factor P (185 aa).

The protein belongs to the elongation factor P family.

The protein resides in the cytoplasm. The protein operates within protein biosynthesis; polypeptide chain elongation. Its function is as follows. Involved in peptide bond synthesis. Stimulates efficient translation and peptide-bond synthesis on native or reconstituted 70S ribosomes in vitro. Probably functions indirectly by altering the affinity of the ribosome for aminoacyl-tRNA, thus increasing their reactivity as acceptors for peptidyl transferase. The protein is Elongation factor P of Salinispora tropica (strain ATCC BAA-916 / DSM 44818 / JCM 13857 / NBRC 105044 / CNB-440).